The following is a 388-amino-acid chain: MRARRGLLRLPRRSLLAALFFFSLSSSLLYFVYVAPGIVNTYLFMVQAQGILLRDNVRTIGAQVYEQVVRSAYAKRNSSLNDSDYPLDLNHSEAFPPTTTFLPEDFTYFANHPCPERLPSMKGPIDINMSEIAMDDIHELFSRDPAIKLGGHWKPADCVPRWKVAILIPFRNRHEHLPVLLRHLLPMLQRQRLQFAFYVIEQVGTQPFNRAMLFNVGFQEAMKDLDWDCLIFHDVDHIPESDRNYYGCGQMPRHFATKLDKYMYLLPYTEFFGGVSGLTVEQFRKINGFPNAFWGWGGEDDDLWNRVQNAGYSVSRPEGDTGKYKSIPHHHRGEVQFLGRYALLRKSKERQGLDGLNNLNYSANVTYDALYKNITVNLTPELAQVTEY.

Topologically, residues 1–14 are cytoplasmic; it reads MRARRGLLRLPRRS. A helical; Signal-anchor for type II membrane protein membrane pass occupies residues 15 to 35; sequence LLAALFFFSLSSSLLYFVYVA. Residues 36–388 lie on the Lumenal side of the membrane; the sequence is PGIVNTYLFM…TPELAQVTEY (353 aa). 4 N-linked (GlcNAc...) asparagine glycosylation sites follow: Asn77, Asn81, Asn90, and Asn128. Cys114 and Cys158 form a disulfide bridge. Residues 169-173, 208-210, 235-236, Tyr264, and Trp296 each bind UDP-alpha-D-galactose; these read PFRNR, FNR, and VD. A disulfide bridge connects residues Cys229 and Cys248. Asp236 provides a ligand contact to Mn(2+). 298–301 lines the N-acetyl-D-glucosamine pocket; it reads GEDD. Residue His329 participates in Mn(2+) binding. 329 to 330 is a binding site for UDP-alpha-D-galactose; it reads HH. N-acetyl-D-glucosamine is bound at residue Arg340. N-linked (GlcNAc...) asparagine glycosylation is found at Asn360, Asn364, and Asn373.

This sequence belongs to the glycosyltransferase 7 family. Mn(2+) is required as a cofactor. As to expression, highest levels in heart, brain, liver and kidney with lower levels in spleen, lung and testis.

It localises to the golgi apparatus. Its subcellular location is the golgi stack membrane. The catalysed reaction is a beta-D-glucosyl-(1&lt;-&gt;1')-N-acylsphing-4-enine + UDP-alpha-D-galactose = a beta-D-Gal-(1-&gt;4)-beta-D-Glc-(1&lt;-&gt;1)-Cer(d18:1(4E)) + UDP + H(+). It participates in protein modification; protein glycosylation. The protein operates within sphingolipid metabolism. Catalyzes the synthesis of lactosylceramide (LacCer) via the transfer of galactose from UDP-galactose to glucosylceramide (GlcCer). LacCer is the starting point in the biosynthesis of all gangliosides (membrane-bound glycosphingolipids) which play pivotal roles in the CNS including neuronal maturation and axonal and myelin formation. Plays a role in the glycosylation of BMPR1A and regulation of its protein stability. Essential for extraembryonic development during early embryogenesis. This Mus musculus (Mouse) protein is Beta-1,4-galactosyltransferase 5.